A 76-amino-acid chain; its full sequence is Small ribosomal subunit protein bS21A (76 aa).

Over residues 35-52 the composition is skewed to basic and acidic residues; the sequence is HYEKPSEKRAREKAEAVR. The segment at 35-76 is disordered; that stretch reads HYEKPSEKRAREKAEAVRRARKLARKRAQREGLVSGRPAAAR. The segment covering 53–62 has biased composition (basic residues); sequence RARKLARKRA.

The protein belongs to the bacterial ribosomal protein bS21 family.

The protein is Small ribosomal subunit protein bS21A of Chelativorans sp. (strain BNC1).